A 482-amino-acid polypeptide reads, in one-letter code: MKFIIKLFPEITIKSQSVRLRFIKILTGNIRNVLKHYDETLAVVRHWDNIEVRAKDENQRLAIRDALTRIPGIHHILEVEDVPFTDMHDIFEKALVQYRDQLEGKTFCVRVKRRGKHDFSSIDVERYVGGGLNQHIESARVKLTNPDVTVHLEVEDDRLLLIKGRYEGIGGFPIGTQEDVLSLISGGFDSGVSSYMLMRRGCRVHYCFFNLGGAAHEIGVRQVAHYLWNRFGSSHRVRFVAINFEPVVGEILEKIDDGQMGVILKRMMVRAASKVAERYGVQALVTGEALGQVSSQTLTNLRLIDNVSDTLILRPLISYDKEHIINLARQIGTEDFARTMPEYCGVISKSPTVKAVKSKIEAEEEKFDFSILDKVVEEANNVDIREIAQQTEQEVVEVETVNGFGPNDVILDIRSIDEQEDKPLKVEGIDVVSLPFYKLSTKFGDLDQNKTWLLWCERGVMSRLQALYLREQGFNNVKVYRP.

The 105-residue stretch at 61-165 folds into the THUMP domain; the sequence is LAIRDALTRI…DDRLLLIKGR (105 aa). ATP-binding positions include 183–184, Lys-265, Gly-287, and Gln-296; that span reads LI. Cys-344 and Cys-456 are joined by a disulfide. The region spanning 404–482 is the Rhodanese domain; that stretch reads FGPNDVILDI…GFNNVKVYRP (79 aa). The active-site Cysteine persulfide intermediate is Cys-456.

Belongs to the ThiI family.

The protein resides in the cytoplasm. The enzyme catalyses [ThiI sulfur-carrier protein]-S-sulfanyl-L-cysteine + a uridine in tRNA + 2 reduced [2Fe-2S]-[ferredoxin] + ATP + H(+) = [ThiI sulfur-carrier protein]-L-cysteine + a 4-thiouridine in tRNA + 2 oxidized [2Fe-2S]-[ferredoxin] + AMP + diphosphate. It catalyses the reaction [ThiS sulfur-carrier protein]-C-terminal Gly-Gly-AMP + S-sulfanyl-L-cysteinyl-[cysteine desulfurase] + AH2 = [ThiS sulfur-carrier protein]-C-terminal-Gly-aminoethanethioate + L-cysteinyl-[cysteine desulfurase] + A + AMP + 2 H(+). It participates in cofactor biosynthesis; thiamine diphosphate biosynthesis. Catalyzes the ATP-dependent transfer of a sulfur to tRNA to produce 4-thiouridine in position 8 of tRNAs, which functions as a near-UV photosensor. Also catalyzes the transfer of sulfur to the sulfur carrier protein ThiS, forming ThiS-thiocarboxylate. This is a step in the synthesis of thiazole, in the thiamine biosynthesis pathway. The sulfur is donated as persulfide by IscS. This is tRNA sulfurtransferase from Escherichia coli (strain K12 / MC4100 / BW2952).